The sequence spans 186 residues: dTTP/UTP pyrophosphatase (186 aa).

The Proton acceptor role is filled by Asp-70.

Belongs to the Maf family. YhdE subfamily. A divalent metal cation serves as cofactor.

The protein localises to the cytoplasm. The enzyme catalyses dTTP + H2O = dTMP + diphosphate + H(+). It carries out the reaction UTP + H2O = UMP + diphosphate + H(+). In terms of biological role, nucleoside triphosphate pyrophosphatase that hydrolyzes dTTP and UTP. May have a dual role in cell division arrest and in preventing the incorporation of modified nucleotides into cellular nucleic acids. In Vibrio vulnificus (strain CMCP6), this protein is dTTP/UTP pyrophosphatase.